Reading from the N-terminus, the 413-residue chain is Serine hydroxymethyltransferase (413 aa).

(6S)-5,6,7,8-tetrahydrofolate-binding positions include Leu-117 and 121–123 (GHL). An N6-(pyridoxal phosphate)lysine modification is found at Lys-226. 349-351 (SPF) is a binding site for (6S)-5,6,7,8-tetrahydrofolate.

This sequence belongs to the SHMT family. In terms of assembly, homodimer. Requires pyridoxal 5'-phosphate as cofactor.

The protein resides in the cytoplasm. It catalyses the reaction (6R)-5,10-methylene-5,6,7,8-tetrahydrofolate + glycine + H2O = (6S)-5,6,7,8-tetrahydrofolate + L-serine. The protein operates within one-carbon metabolism; tetrahydrofolate interconversion. Its pathway is amino-acid biosynthesis; glycine biosynthesis; glycine from L-serine: step 1/1. Its function is as follows. Catalyzes the reversible interconversion of serine and glycine with tetrahydrofolate (THF) serving as the one-carbon carrier. This reaction serves as the major source of one-carbon groups required for the biosynthesis of purines, thymidylate, methionine, and other important biomolecules. Also exhibits THF-independent aldolase activity toward beta-hydroxyamino acids, producing glycine and aldehydes, via a retro-aldol mechanism. In Listeria welshimeri serovar 6b (strain ATCC 35897 / DSM 20650 / CCUG 15529 / CIP 8149 / NCTC 11857 / SLCC 5334 / V8), this protein is Serine hydroxymethyltransferase.